Reading from the N-terminus, the 89-residue chain is Small ribosomal subunit protein uS15 (89 aa).

Belongs to the universal ribosomal protein uS15 family. As to quaternary structure, part of the 30S ribosomal subunit. Forms a bridge to the 50S subunit in the 70S ribosome, contacting the 23S rRNA.

Its function is as follows. One of the primary rRNA binding proteins, it binds directly to 16S rRNA where it helps nucleate assembly of the platform of the 30S subunit by binding and bridging several RNA helices of the 16S rRNA. In terms of biological role, forms an intersubunit bridge (bridge B4) with the 23S rRNA of the 50S subunit in the ribosome. This Sodalis glossinidius (strain morsitans) protein is Small ribosomal subunit protein uS15.